Reading from the N-terminus, the 204-residue chain is MAPKIAIVYYSMYGHIKKMADAELKGIQEAGGDAKLFQVAETLPQEVLDKMYAPPKDSSVPVLEDPAVLEEFDGILFGIPTRYGNFPAQFKTFWDKTGKQWQQGAFWGKYAGVFVSTGTLGGGQETTAITSMSTLVDHGFIYVPLGYKTAFSMLANLDEVHGGSPWGAGTFSAGDGSRQPSELELNIAQAQGKAFYEAVAKAHQ.

In terms of domain architecture, Flavodoxin-like spans 5-195 (IAIVYYSMYG…NIAQAQGKAF (191 aa)).

Belongs to the WrbA family.

Its subcellular location is the cytoplasm. The sequence is that of Minor allergen Alt a 7 (ALTA7) from Alternaria alternata (Alternaria rot fungus).